The following is a 146-amino-acid chain: Meiotically up-regulated gene 96 protein (146 aa).

Residues 85–104 (LIRYSLILTCLVAILLSVLW) form a helical membrane-spanning segment.

The protein resides in the cytoplasm. Its subcellular location is the membrane. Functionally, has a role in meiosis. The sequence is that of Meiotically up-regulated gene 96 protein (mug96) from Schizosaccharomyces pombe (strain 972 / ATCC 24843) (Fission yeast).